Consider the following 463-residue polypeptide: tRNA (guanine(10)-N(2))-methyltransferase TRMT11 (463 aa).

Alanine 2 carries the N-acetylalanine modification.

The protein belongs to the class I-like SAM-binding methyltransferase superfamily. TRM11 methyltransferase family. In terms of assembly, part of the heterodimeric TRMT11-TRM112 methyltransferase complex; this complex forms an active tRNA methyltransferase, where TRMT112 acts as an activator of the catalytic subunit TRMT11.

The protein localises to the cytoplasm. It carries out the reaction guanosine(10) in tRNA + S-adenosyl-L-methionine = N(2)-methylguanosine(10) in tRNA + S-adenosyl-L-homocysteine + H(+). In terms of biological role, catalytic subunit of the TRMT11-TRM112 methyltransferase complex, that specifically mediates the S-adenosyl-L-methionine-dependent N(2)-methylation of guanosine nucleotide at position 10 (m2G10) in tRNAs. This is one of the major tRNA (guanine-N(2))-methyltransferases. This Pongo abelii (Sumatran orangutan) protein is tRNA (guanine(10)-N(2))-methyltransferase TRMT11.